A 309-amino-acid chain; its full sequence is DSC E3 ubiquitin ligase complex subunit C (309 aa).

Asparagine 61 is a glycosylation site (N-linked (GlcNAc...) asparagine). 2 disordered regions span residues 88-110 and 148-177; these read LPPS…GKGK and EQAD…FDRL. Helical transmembrane passes span 257-277 and 289-309; these read DDML…AMWL and GLAV…RIMN.

It belongs to the dsc3 family. As to quaternary structure, component of the DSC E3 ubiquitin ligase complex composed of dscA, dscB, dscC and dscD.

Its subcellular location is the endoplasmic reticulum membrane. Its pathway is protein modification; protein ubiquitination. Component of the DSC E3 ubiquitin ligase complex which is required for the srbA transcriptional activator proteolytic cleavage to release the soluble transcription factor from the membrane in low oxygen or sterol conditions. Required for growth during hypoxia and triazole drug susceptibility, as well as for virulence in a murine model of invasive pulmonary aspergillosis (IPA). This Aspergillus fumigatus (strain CBS 144.89 / FGSC A1163 / CEA10) (Neosartorya fumigata) protein is DSC E3 ubiquitin ligase complex subunit C.